A 199-amino-acid polypeptide reads, in one-letter code: NAD(P)H dehydrogenase (quinone) (199 aa).

In terms of domain architecture, Flavodoxin-like spans 4–190 (VLVLYYSAYG…AGARYQGKTI (187 aa)). FMN contacts are provided by residues 10–15 (SAYGHI) and 78–80 (TRF). Residue tyrosine 12 participates in NAD(+) binding. Position 98 (tryptophan 98) interacts with substrate. FMN-binding positions include 113 to 119 (STATQHG) and histidine 134.

This sequence belongs to the WrbA family. FMN serves as cofactor.

The catalysed reaction is a quinone + NADH + H(+) = a quinol + NAD(+). The enzyme catalyses a quinone + NADPH + H(+) = a quinol + NADP(+). This is NAD(P)H dehydrogenase (quinone) from Rhodopseudomonas palustris (strain BisB5).